The primary structure comprises 88 residues: Large ribosomal subunit protein bL31B (88 aa).

This sequence belongs to the bacterial ribosomal protein bL31 family. Type B subfamily. Part of the 50S ribosomal subunit.

The sequence is that of Large ribosomal subunit protein bL31B from Pasteurella multocida (strain Pm70).